The following is a 1104-amino-acid chain: MPRPELPLPEGWEEARDFDGKVYYIDHRNRTTSWIDPRDRYTKPLTFADCISDELPLGWEEAYDPQVGDYFIDHNTKTTQIEDPRVQWRREQEHMLKDYLVVAQEALSAQKEIYQVKQQRLELAQQEYQQLHAVWEHKLGSQVSLVSGSSSSSKYDPEILKAEIATAKSRVNKLKREMVHLQHELQFKERGFQTLKKIDERMSDAQGGYKLDEAQAVLRETKAIKKAITCGEKEKQDLIKSLAMLKDGFRTDRGSHSDLWSSSSSLESSSFPMPKQFLDVSSQTDISGSFSTSSNNQLAEKVRLRLRYEEAKRRIANLKIQLAKLDSEAWPGVLDSERDRLILINEKEELLKEMRFISPRKWTQGEVEQLEMARRRLEKDLQAARDTQSKALTERLKLNSKRNQLVRELEEATRQVATLHSQLKSLSSSMQSLSSGSSPGSLTSSRGSLAASSLDSSTSASFTDLYYDPFEQLDSELQSKVELLFLEGATGFRPSGCITTIHEDEVAKTQKAEGGSRLQALRSLSGTPRSMTSLSPRSSLSSPSPPCSPLITDPLLTGDAFLAPLEFEDTELSTTLCELNLGGSGTQERYRLEEPGPEGKPLGQAASVAPGCGLKVACVSAAVSDESVAGDSGVYEASAQRPGTSEAAAFDSDESEAVGATRVQIALKYDEKNKQFAILIIQLSHLSALSLQQDQKVNIRVAILPCSESSTCLFRTRPLDSANTLVFNEAFWVSISYPALHQKTLRVDVCTTDRSHTEECLGGAQISLAEVCRSGERSTRWYNLLSYKYLKKQCREPQPTEAPGPDHVDAVSALLEQTAVELEKRQEGRSSSQTLEGSWTYEEEASENEAVAEEEEEGEEDVFTEKVSPEAEECPALKVDRETNTDSVAPSPTVVRPKDRRVGAPSTGPFLRGNTIIRSKTFSPGPQSQYVCRLNRSDSDSSTLSKKPPFVRNSLERRSVRMKRPSSVKSLRTERLIRTSLDLELDLQATRTWHSQLTQEISVLKELKEHLEQAKNHGEKELPQWLREDERFRLLLRMLEKKVDRGEHKSELQADKMMRAAAKDVHRLRGQSCKEPPEVQSFREKMAFFTRPRMNIPALSADDV.

2 consecutive WW domains span residues 6-39 and 53-86; these read LPLP…DPRD and DELP…DPRV. The stretch at 107-193 forms a coiled coil; the sequence is LSAQKEIYQV…ELQFKERGFQ (87 aa). The residue at position 141 (S141) is a Phosphoserine. Disordered regions lie at residues 429 to 449 and 509 to 547; these read SMQS…RGSL and TQKA…SPPC. Low complexity predominate over residues 527–542; sequence TPRSMTSLSPRSSLSS. S535 bears the Phosphoserine mark. S542 bears the Phosphoserine; by CDK1 mark. Positions 659-782 constitute a C2 domain; sequence GATRVQIALK…RSGERSTRWY (124 aa). The interval 822–949 is disordered; it reads LEKRQEGRSS…DSSTLSKKPP (128 aa). The interaction with histone H3 stretch occupies residues 836 to 1104; it reads EGSWTYEEEA…NIPALSADDV (269 aa). Positions 841–862 are enriched in acidic residues; that stretch reads YEEEASENEAVAEEEEEGEEDV. 3 positions are modified to phosphoserine: S887, S891, and S919. The segment covering 916–930 has biased composition (polar residues); sequence IIRSKTFSPGPQSQY. T921 carries the post-translational modification Phosphothreonine. At S923 the chain carries Phosphoserine; by CDK1. Residue S939 is modified to Phosphoserine. Interaction with PRKCZ regions lie at residues 945–988 and 948–967; these read SKKP…LDLQ and PPFV…RPSS. Phosphoserine; by PKC/PRKCZ is present on residues S967 and S970. Residues 994 to 1024 adopt a coiled-coil conformation; it reads HSQLTQEISVLKELKEHLEQAKNHGEKELPQ. An ADDV motif motif is present at residues 1102–1104; it reads DDV.

Belongs to the WWC family. KIBRA subfamily. In terms of assembly, homodimer. Forms heterodimers with WWC2 and WWC3. Interacts with DDN. Interacts with DYNLL1 and histone H3. The interaction with DYNLL1 is mandatory for the recruitment and transactivation functions of ESR1 or DYNLL1 to the target chromatin and the interaction with histone H3 ensures proper regulatory interaction of WWC1-DYNLL1-ESR1 complexes with target chromatin. Interacts (via WW domains) with DDR1 (via PPxY motif) in a collagen-regulated manner. Interacts with PRKCZ (via the protein kinase domain). Forms a tripartite complex with DDR1 and PRKCZ, but predominantly in the absence of collagen. Interacts (via the ADDV motif) with PATJ (via PDZ domain 8). Interacts (via WW domains) with SYNPO (via PPxY motifs). Interacts with NF2 and SNX4. Interacts with CCDC141; retains AMPAR in the cytosol after internalization. Interacts with DLC1 and PRKCZ. Interacts (via WW domains) with LATS1 and LATS2. In terms of processing, phosphorylation at Ser-542 and Ser-923 by CDK1 in response to spindle damage stress regulates mitotic exit, these two sites are dephosphorylated by CDC14B. As to expression, mammary epithelium.

It is found in the cytoplasm. The protein localises to the perinuclear region. The protein resides in the nucleus. Its subcellular location is the cell projection. It localises to the ruffle membrane. It is found in the cytosol. Regulator of the Hippo signaling pathway, also known as the Salvador-Warts-Hippo (SWH) pathway. Enhances phosphorylation of LATS1 and YAP1 and negatively regulates cell proliferation and organ growth due to a suppression of the transcriptional activity of YAP1, the major effector of the Hippo pathway. Along with NF2 can synergistically induce the phosphorylation of LATS1 and LATS2 and function in the regulation of Hippo signaling pathway. Acts as a transcriptional coactivator of ESR1 which plays an essential role in DYNLL1-mediated ESR1 transactivation. Modulates directional migration of podocytes. May be associated with memory performance. Regulates collagen-stimulated activation of the ERK/MAPK cascade. Plays an important role in regulating AMPA-selective glutamate receptors (AMPARs) trafficking. The chain is Protein KIBRA (Wwc1) from Mus musculus (Mouse).